The sequence spans 289 residues: Enoyl-CoA delta isomerase 1, mitochondrial (289 aa).

A mitochondrion-targeting transit peptide spans methionine 1–arginine 28. Lysine 48 carries the post-translational modification N6-acetyllysine; alternate. At lysine 48 the chain carries N6-succinyllysine; alternate. The residue at position 71 (lysine 71) is an N6-succinyllysine. Lysine 76 bears the N6-acetyllysine mark. Substrate is bound by residues alanine 93–leucine 97, glycine 140, and asparagine 164. An N6-acetyllysine; alternate mark is found at lysine 222, lysine 229, lysine 255, and lysine 270. 4 positions are modified to N6-succinyllysine; alternate: lysine 222, lysine 229, lysine 255, and lysine 270. Lysine 275 bears the N6-succinyllysine mark. Lysine 283 carries the N6-acetyllysine; alternate modification. Position 283 is an N6-succinyllysine; alternate (lysine 283).

It belongs to the enoyl-CoA hydratase/isomerase family. In terms of assembly, homotrimer.

The protein resides in the mitochondrion matrix. The enzyme catalyses a (3Z)-enoyl-CoA = a 4-saturated (2E)-enoyl-CoA. It catalyses the reaction a (3E)-enoyl-CoA = a 4-saturated (2E)-enoyl-CoA. It carries out the reaction (3Z)-octenoyl-CoA = (2E)-octenoyl-CoA. The catalysed reaction is (2E)-tetradecenoyl-CoA = (3Z)-tetradecenoyl-CoA. The enzyme catalyses (3Z)-dodecenoyl-CoA = (2E)-dodecenoyl-CoA. It catalyses the reaction (3Z)-hexenoyl-CoA = (2E)-hexenoyl-CoA. It carries out the reaction (3Z)-decenoyl-CoA = (2E)-decenoyl-CoA. Its pathway is lipid metabolism; fatty acid beta-oxidation. Functionally, key enzyme of fatty acid beta-oxidation. Able to isomerize both 3-cis (3Z) and 3-trans (3E) double bonds into the 2-trans (2E) form in a range of enoyl-CoA species, with a preference for (3Z)-enoyl-CoAs over (3E)-enoyl-CoAs. The catalytic efficiency of this enzyme is not affected by the fatty acyl chain length. This chain is Enoyl-CoA delta isomerase 1, mitochondrial, found in Mus musculus (Mouse).